The sequence spans 459 residues: Vitronectin (459 aa).

An N-terminal signal peptide occupies residues 1-19; that stretch reads MAPLRPLLMLALLAWVALA. The SMB domain occupies 20–63; it reads DQESCKGRCTDGFIAERKCQCDELCSYYQSCCTDYVAECKPQVT. 7 disulfides stabilise this stretch: Cys24–Cys28, Cys24–Cys40, Cys28–Cys58, Cys38–Cys40, Cys38–Cys51, Cys44–Cys50, and Cys51–Cys58. The Cell attachment site motif lies at 64-66; that stretch reads RGD. A sulfotyrosine mark is found at Tyr75, Tyr78, and Tyr80. Asn87 and Asn146 each carry an N-linked (GlcNAc...) asparagine glycan. 3 Hemopexin repeats span residues 135–179, 180–227, and 228–285; these read GKPF…VWGI, KGPI…FKGI, and PDDV…FALM. Residues Ser289 and Ser378 each carry the phosphoserine modification. Residues 338-380 are disordered; sequence LKPSQPKMTKSARRSGKRYRSRRGRGRGRGHSRSQKSHRQSRS. A compositionally biased stretch (basic residues) spans 347–378; the sequence is KSARRSGKRYRSRRGRGRGRGHSRSQKSHRQS. Residues Tyr398 and Tyr401 each carry the sulfotyrosine modification. Residues 400 to 453 form a Hemopexin 4 repeat; sequence DYKMDWLVPATCEPIQSVYFFSGEEYYRVNLRTQRVDTVTPPYPRSIAQYWLGC.

Monomer. Interacts with SERPINE1/PAI1 and C1QBP. Post-translationally, sulfated on tyrosine residues. N- and O-glycosylated. In terms of processing, it has been suggested that the active SMB domain may be permitted considerable disulfide bond heterogeneity or variability, thus two alternate disulfide patterns based on 3D structures are described with 1 disulfide bond conserved in both. In terms of tissue distribution, plasma.

It is found in the secreted. The protein resides in the extracellular space. Functionally, vitronectin is a cell adhesion and spreading factor found in serum and tissues. Vitronectin interact with glycosaminoglycans and proteoglycans. Is recognized by certain members of the integrin family and serves as a cell-to-substrate adhesion molecule. Inhibitor of the membrane-damaging effect of the terminal cytolytic complement pathway. In Sus scrofa (Pig), this protein is Vitronectin (VTN).